The primary structure comprises 379 residues: Putative acetyl-CoA C-acetyltransferase VraB (379 aa).

The Acyl-thioester intermediate role is filled by Cys-86. His-338 acts as the Proton acceptor in catalysis.

It belongs to the thiolase-like superfamily. Thiolase family.

The polypeptide is Putative acetyl-CoA C-acetyltransferase VraB (vraB) (Staphylococcus aureus (strain COL)).